We begin with the raw amino-acid sequence, 456 residues long: Glutamate--tRNA ligase 2 (456 aa).

The 'HIGH' region signature appears at 8 to 18 (PSPTGYIHIGN). Residues 249-253 (GLSKR) carry the 'KMSKS' region motif. K252 lines the ATP pocket.

It belongs to the class-I aminoacyl-tRNA synthetase family. Glutamate--tRNA ligase type 1 subfamily. As to quaternary structure, monomer.

The protein localises to the cytoplasm. The enzyme catalyses tRNA(Glu) + L-glutamate + ATP = L-glutamyl-tRNA(Glu) + AMP + diphosphate. Catalyzes the attachment of glutamate to tRNA(Glu) in a two-step reaction: glutamate is first activated by ATP to form Glu-AMP and then transferred to the acceptor end of tRNA(Glu). This Bartonella bacilliformis (strain ATCC 35685 / KC583 / Herrer 020/F12,63) protein is Glutamate--tRNA ligase 2.